Here is a 222-residue protein sequence, read N- to C-terminus: Protein DEHYDRATION-INDUCED 19 homolog 6 (222 aa).

Position 116 is a phosphoserine (Ser116).

The protein belongs to the Di19 family. Post-translationally, phosphorylated in vitro by CPK3 or CPK11. In terms of tissue distribution, expressed in seedlings, roots, leaves, stems, flowers and siliques.

It is found in the nucleus. The sequence is that of Protein DEHYDRATION-INDUCED 19 homolog 6 (DI19-6) from Arabidopsis thaliana (Mouse-ear cress).